Consider the following 987-residue polypeptide: Probable outer membrane protein PmpG (987 aa).

The signal sequence occupies residues Met1 to Ala25. One can recognise an Autotransporter domain in the interval Gly707–Phe987.

It belongs to the PMP outer membrane protein family.

It localises to the secreted. The protein resides in the cell wall. It is found in the cell outer membrane. The chain is Probable outer membrane protein PmpG (pmpG) from Chlamydia muridarum (strain MoPn / Nigg).